We begin with the raw amino-acid sequence, 299 residues long: MDPTLISLGALALAGAAATVSGCAEDLESDVGSQSNPNSQVQLGPQMGNIHRYFNKAISGEPVSYGLYVAVAGTIAWALINAGLNAVLAIIVGSGVAAVVHGAYSVSAFLGRTVGQSKKFGQPVYMDVLTSHIGPIVGHGFIAVFTMTLAAYLATTALGNPFPLPLVALIFGITVGAIGSSTGDVHYGAEREYQKYPFGGGIPVANQGDIDIYAEYGVRNGLDSSYFCSRFGGPLTGLCFGLIIFLDGWRSILGNIIGGDLVTKTSIALLVGLLVVAVAAGINRKLEVYARNKYGPYRN.

Helical transmembrane passes span 57-79 (AISG…AWAL), 95-115 (GVAA…RTVG), 133-153 (IGPI…AAYL), 158-178 (LGNP…VGAI), 237-257 (GLCF…GNII), and 262-282 (VTKT…AAGI).

It belongs to the MtrE family. The complex is composed of 8 subunits; MtrA, MtrB, MtrC, MtrD, MtrE, MtrF, MtrG and MtrH.

Its subcellular location is the cell membrane. It catalyses the reaction 5-methyl-5,6,7,8-tetrahydromethanopterin + coenzyme M + 2 Na(+)(in) = 5,6,7,8-tetrahydromethanopterin + methyl-coenzyme M + 2 Na(+)(out). The protein operates within one-carbon metabolism; methanogenesis from CO(2); methyl-coenzyme M from 5,10-methylene-5,6,7,8-tetrahydromethanopterin: step 2/2. Its function is as follows. Part of a complex that catalyzes the formation of methyl-coenzyme M and tetrahydromethanopterin from coenzyme M and methyl-tetrahydromethanopterin. This is an energy-conserving, sodium-ion translocating step. This chain is Tetrahydromethanopterin S-methyltransferase subunit E, found in Methanococcus maripaludis (strain C5 / ATCC BAA-1333).